A 202-amino-acid chain; its full sequence is Holliday junction branch migration complex subunit RuvA (202 aa).

The domain I stretch occupies residues 1-62 (MYEYLHGLIT…DTAQTLYGFS (62 aa)). The domain II stretch occupies residues 63–141 (DFAEKQLFLK…DLAPATDDNT (79 aa)). Positions 142–151 (LFTPEVAPTT) are flexible linker. Residues 152-202 (TENPQLADALAALTALGYRETAVKKITAQLRQFNGQTTNDYLSEGLRLLTK) are domain III.

Belongs to the RuvA family. As to quaternary structure, homotetramer. Forms an RuvA(8)-RuvB(12)-Holliday junction (HJ) complex. HJ DNA is sandwiched between 2 RuvA tetramers; dsDNA enters through RuvA and exits via RuvB. An RuvB hexamer assembles on each DNA strand where it exits the tetramer. Each RuvB hexamer is contacted by two RuvA subunits (via domain III) on 2 adjacent RuvB subunits; this complex drives branch migration. In the full resolvosome a probable DNA-RuvA(4)-RuvB(12)-RuvC(2) complex forms which resolves the HJ.

It localises to the cytoplasm. The RuvA-RuvB-RuvC complex processes Holliday junction (HJ) DNA during genetic recombination and DNA repair, while the RuvA-RuvB complex plays an important role in the rescue of blocked DNA replication forks via replication fork reversal (RFR). RuvA specifically binds to HJ cruciform DNA, conferring on it an open structure. The RuvB hexamer acts as an ATP-dependent pump, pulling dsDNA into and through the RuvAB complex. HJ branch migration allows RuvC to scan DNA until it finds its consensus sequence, where it cleaves and resolves the cruciform DNA. The polypeptide is Holliday junction branch migration complex subunit RuvA (Levilactobacillus brevis (strain ATCC 367 / BCRC 12310 / CIP 105137 / JCM 1170 / LMG 11437 / NCIMB 947 / NCTC 947) (Lactobacillus brevis)).